A 184-amino-acid polypeptide reads, in one-letter code: C-phycoerythrin beta chain (184 aa).

Residues Cys48 and Cys59 each coordinate (2R,3E)-phycoerythrobilin. N4-methylasparagine is present on Asn70. (2R,3E)-phycoerythrobilin is bound by residues Cys80 and Cys165.

Belongs to the phycobiliprotein family. Heterodimer of an alpha and a beta chain. Post-translationally, contains three covalently linked bilin chromophores.

It localises to the cellular thylakoid membrane. Light-harvesting photosynthetic bile pigment-protein from the phycobiliprotein complex. In Microchaete diplosiphon (Fremyella diplosiphon), this protein is C-phycoerythrin beta chain (cpeB).